Reading from the N-terminus, the 304-residue chain is Methionyl-tRNA formyltransferase (304 aa).

111 to 114 is a binding site for (6S)-5,6,7,8-tetrahydrofolate; it reads SLLP.

The protein belongs to the Fmt family.

It catalyses the reaction L-methionyl-tRNA(fMet) + (6R)-10-formyltetrahydrofolate = N-formyl-L-methionyl-tRNA(fMet) + (6S)-5,6,7,8-tetrahydrofolate + H(+). Attaches a formyl group to the free amino group of methionyl-tRNA(fMet). The formyl group appears to play a dual role in the initiator identity of N-formylmethionyl-tRNA by promoting its recognition by IF2 and preventing the misappropriation of this tRNA by the elongation apparatus. This chain is Methionyl-tRNA formyltransferase, found in Campylobacter fetus subsp. fetus (strain 82-40).